Consider the following 548-residue polypeptide: Phosphoglucomutase (548 aa).

S135 serves as the catalytic Phosphoserine intermediate. The Mg(2+) site is built by S135, D288, D290, and D292.

This sequence belongs to the phosphohexose mutase family. Requires Mg(2+) as cofactor.

It carries out the reaction alpha-D-glucose 1-phosphate = alpha-D-glucose 6-phosphate. Its pathway is glycolipid metabolism; diglucosyl-diacylglycerol biosynthesis. Functionally, catalyzes the interconversion between glucose-6-phosphate and alpha-glucose-1-phosphate. This is the first step in the biosynthesis of diglucosyl-diacylglycerol (Glc2-DAG), i.e. a glycolipid found in the membrane, which is also used as a membrane anchor for lipoteichoic acid (LTA). This chain is Phosphoglucomutase (pgcA), found in Staphylococcus haemolyticus (strain JCSC1435).